Here is an 859-residue protein sequence, read N- to C-terminus: MVSIAFYGGIPGGISTPITQQSEKSKCEENTMFQPYCYNNDSKNSMAESKEARDQEMNLKEESKEEKRRNDWWKKGMFLLCLAGTTGGILWWYEGLPQQHYIGLVAIGGRLNGSGQSNAIECWGSFPGCRPFQNYFSYETNRSMHMDNNTATLLEAYHREITFIYKSSCTDSDHCQEYQCKKVNLNSSDSSNSVRVEDVTNTAEYWGFKWLECNQTENFKTILVPENEMVNINDTDTWIPKGCNETWARVKRCPIDILYGIHPIRLCVQPPFFLVQEKGIADTSRIGNCGPTIFLGVLEDNKGVVRGDYIACNVRRLNINRKDYTGIYQVPIFYTCTFTNITSCNNEPIISVIMYETNQVQYLLCNNNNSNNYNCVVQSFGVIGQAHLELPRPNKRIRNQSFNQYNCSINNKTELETWKLVKTSGVTPLPISSEANTGLIRHKRDFGISAIVAAIVAATAIAASATMSYVALTEVNKIMEVQNHTFEVENSTLNGMDLIERQIKILYAMILQTHADVQLLKERQQVEETFNLIGCIERTHVFCHTGHPWNMSWGHLNESTQWDDWVSKMEDLNQEILTTLHGARNNLAQSMITFNTPDSIAQFGKDLWSHIGNWIPGLGASIIKYIVMFLLIYLLLTSSPKILRALWKVTSGAGSSGSRYLKKKFHHKHASREDTWDQAQHNIHLAGVTGGSGDKYYKQKYSRNDWNGESEEYNRRPKSWVKSIEAFGESYISEKTKGEISQPGAAINEHKNGSGGNNPHQGSLDLEIRSEGGNIYDCCIKAQEGTLAIPCCGFPLWLFWGLVIIVGRIAGYGLRGLAVIIRICIRGLNLIFEIIRKMLDYIGRALNPGTSHVSMPQYV.

The propeptide occupies 1 to 6 (MVSIAF). The Extracellular segment spans residues 7–614 (YGGIPGGIST…KDLWSHIGNW (608 aa)). Asn40 carries an N-linked (GlcNAc...) asparagine; by host glycan. Residues 47-66 (AESKEARDQEMNLKEESKEE) are disordered. The span at 48–66 (ESKEARDQEMNLKEESKEE) shows a compositional bias: basic and acidic residues. Asn112, Asn141, Asn148, Asn186, Asn214, Asn233, Asn244, Asn340, Asn368, Asn399, Asn406, and Asn411 each carry an N-linked (GlcNAc...) asparagine; by host glycan. Residues 446–466 (FGISAIVAAIVAATAIAASAT) are fusion peptide. N-linked (GlcNAc...) asparagine; by host glycosylation is found at Asn483 and Asn490. The immunosuppression stretch occupies residues 498 to 513 (LIERQIKILYAMILQT). N-linked (GlcNAc...) asparagine; by host glycosylation is found at Asn550 and Asn557. Coiled coils occupy residues 576–624 (ILTT…SIIK) and 663–699 (KKFH…YYKQ). The chain crosses the membrane as a helical span at residues 615–635 (IPGLGASIIKYIVMFLLIYLL). Topologically, residues 636–859 (LTSSPKILRA…TSHVSMPQYV (224 aa)) are cytoplasmic.

As to quaternary structure, the mature envelope protein (Env) consists of a trimer of SU-TM heterodimers attached by noncovalent interactions or by a labile interchain disulfide bond. Post-translationally, specific enzymatic cleavages in vivo yield mature proteins. Envelope glycoproteins are synthesized as an inactive precursor that is N-glycosylated and processed likely by host cell furin or by a furin-like protease in the Golgi to yield the mature SU and TM proteins. The cleavage site between SU and TM requires the minimal sequence [KR]-X-[KR]-R.

The protein localises to the virion membrane. The protein resides in the host cell membrane. Its function is as follows. The surface protein (SU) attaches the virus to the host cell by binding to its receptor. This interaction triggers the refolding of the transmembrane protein (TM) and is thought to activate its fusogenic potential by unmasking its fusion peptide. Fusion occurs at the host cell plasma membrane. Functionally, the transmembrane protein (TM) acts as a class I viral fusion protein. Under the current model, the protein has at least 3 conformational states: pre-fusion native state, pre-hairpin intermediate state, and post-fusion hairpin state. During viral and target cell membrane fusion, the coiled coil regions (heptad repeats) assume a trimer-of-hairpins structure, positioning the fusion peptide in close proximity to the C-terminal region of the ectodomain. The formation of this structure appears to drive apposition and subsequent fusion of viral and target cell membranes. Membranes fusion leads to delivery of the nucleocapsid into the cytoplasm. This is Envelope glycoprotein (env) from Equus asinus (Donkey).